Here is a 307-residue protein sequence, read N- to C-terminus: Pantothenate kinase (307 aa).

87-94 (GSVAVGKS) contributes to the ATP binding site.

The protein belongs to the prokaryotic pantothenate kinase family.

The protein localises to the cytoplasm. The enzyme catalyses (R)-pantothenate + ATP = (R)-4'-phosphopantothenate + ADP + H(+). Its pathway is cofactor biosynthesis; coenzyme A biosynthesis; CoA from (R)-pantothenate: step 1/5. The polypeptide is Pantothenate kinase (Vibrio vulnificus (strain YJ016)).